The following is a 232-amino-acid chain: Large ribosomal subunit protein uL1 (232 aa).

This sequence belongs to the universal ribosomal protein uL1 family. In terms of assembly, part of the 50S ribosomal subunit.

Binds directly to 23S rRNA. The L1 stalk is quite mobile in the ribosome, and is involved in E site tRNA release. Functionally, protein L1 is also a translational repressor protein, it controls the translation of the L11 operon by binding to its mRNA. The polypeptide is Large ribosomal subunit protein uL1 (Chelativorans sp. (strain BNC1)).